Here is a 276-residue protein sequence, read N- to C-terminus: NADPH-dependent 7-cyano-7-deazaguanine reductase (276 aa).

83-85 serves as a coordination point for substrate; the sequence is IES. Residue 85–86 participates in NADPH binding; sequence SK. The Thioimide intermediate role is filled by cysteine 184. Aspartate 191 functions as the Proton donor in the catalytic mechanism. 223–224 is a substrate binding site; the sequence is HE. 252–253 contacts NADPH; the sequence is RG.

It belongs to the GTP cyclohydrolase I family. QueF type 2 subfamily. Homodimer.

The protein localises to the cytoplasm. The enzyme catalyses 7-aminomethyl-7-carbaguanine + 2 NADP(+) = 7-cyano-7-deazaguanine + 2 NADPH + 3 H(+). It functions in the pathway tRNA modification; tRNA-queuosine biosynthesis. Its function is as follows. Catalyzes the NADPH-dependent reduction of 7-cyano-7-deazaguanine (preQ0) to 7-aminomethyl-7-deazaguanine (preQ1). The chain is NADPH-dependent 7-cyano-7-deazaguanine reductase from Pseudomonas fluorescens (strain SBW25).